Consider the following 56-residue polypeptide: Potassium channel toxin alpha-KTx 9.8 (56 aa).

The signal sequence occupies residues 1–19 (MSRLFTLVLIVLAMNVMMA). A propeptide spanning residues 20–28 (IISDPVVEA) is cleaved from the precursor. 3 disulfides stabilise this stretch: C31/C47, C34/C52, and C38/C54.

This sequence belongs to the short scorpion toxin superfamily. Potassium channel inhibitor family. Alpha-KTx 09 subfamily. In terms of tissue distribution, expressed by the venom gland.

The protein resides in the secreted. Functionally, potassium channel inhibitor. This Buthus israelis (Israeli scorpion) protein is Potassium channel toxin alpha-KTx 9.8.